The sequence spans 163 residues: Nucleotide-binding protein YajQ (163 aa).

The protein belongs to the YajQ family.

In terms of biological role, nucleotide-binding protein. The polypeptide is Nucleotide-binding protein YajQ (Shigella flexneri).